The sequence spans 122 residues: Alkaline proteinase inhibitor (122 aa).

Positions 1-25 are cleaved as a signal peptide; it reads MPRFSHLIGCVWQVLFVSAGAQAMA. The interval 101-122 is disordered; the sequence is QKEGEYTGRTPSGADVTLQRTN.

This sequence belongs to the protease inhibitor I38 family.

The protein localises to the periplasm. Inhibitor of the alkaline protease. The chain is Alkaline proteinase inhibitor (inh) from Pseudomonas tolaasii.